Here is a 274-residue protein sequence, read N- to C-terminus: Ribosomal RNA small subunit methyltransferase A (274 aa).

S-adenosyl-L-methionine-binding residues include N20, L22, G47, E68, D90, and N110.

This sequence belongs to the class I-like SAM-binding methyltransferase superfamily. rRNA adenine N(6)-methyltransferase family. RsmA subfamily.

It is found in the cytoplasm. It catalyses the reaction adenosine(1518)/adenosine(1519) in 16S rRNA + 4 S-adenosyl-L-methionine = N(6)-dimethyladenosine(1518)/N(6)-dimethyladenosine(1519) in 16S rRNA + 4 S-adenosyl-L-homocysteine + 4 H(+). In terms of biological role, specifically dimethylates two adjacent adenosines (A1518 and A1519) in the loop of a conserved hairpin near the 3'-end of 16S rRNA in the 30S particle. May play a critical role in biogenesis of 30S subunits. The polypeptide is Ribosomal RNA small subunit methyltransferase A (Chlorobaculum parvum (strain DSM 263 / NCIMB 8327) (Chlorobium vibrioforme subsp. thiosulfatophilum)).